The following is a 126-amino-acid chain: MSALDDSIRVEVKTEYIEQQSSPEDQKYLFSYTITIVNLGEQAAKLETRHWIITDANGKISEVQGAGVVGETPTIPPNTAYQYTSGTVLDTPLGIMYGTYGMVSESGERFKATIKPFRLALPGLLH.

One can recognise an ApaG domain in the interval 2 to 126 (SALDDSIRVE…FRLALPGLLH (125 aa)).

This is Protein ApaG from Shewanella sp. (strain MR-4).